We begin with the raw amino-acid sequence, 231 residues long: Large ribosomal subunit protein uL1 (231 aa).

Belongs to the universal ribosomal protein uL1 family. As to quaternary structure, part of the 50S ribosomal subunit.

Binds directly to 23S rRNA. The L1 stalk is quite mobile in the ribosome, and is involved in E site tRNA release. Functionally, protein L1 is also a translational repressor protein, it controls the translation of the L11 operon by binding to its mRNA. This Beijerinckia indica subsp. indica (strain ATCC 9039 / DSM 1715 / NCIMB 8712) protein is Large ribosomal subunit protein uL1.